Consider the following 131-residue polypeptide: Profilin-1 (131 aa).

This sequence belongs to the profilin family. In terms of assembly, occurs in many kinds of cells as a complex with monomeric actin in a 1:1 ratio.

It localises to the cytoplasm. The protein localises to the cytoskeleton. Binds to actin and affects the structure of the cytoskeleton. At high concentrations, profilin prevents the polymerization of actin, whereas it enhances it at low concentrations. By binding to PIP2, it inhibits the formation of IP3 and DG. The sequence is that of Profilin-1 from Lilium longiflorum (Trumpet lily).